The following is a 512-amino-acid chain: tRNA-2-methylthio-N(6)-dimethylallyladenosine synthase (512 aa).

The 117-residue stretch at arginine 23–histidine 139 folds into the MTTase N-terminal domain. Positions 32, 68, 102, 176, 180, and 183 each coordinate [4Fe-4S] cluster. The 237-residue stretch at arginine 162 to glutamate 398 folds into the Radical SAM core domain. Residues arginine 401–isoleucine 469 enclose the TRAM domain. Residues alanine 477–cysteine 512 are disordered.

Belongs to the methylthiotransferase family. MiaB subfamily. As to quaternary structure, monomer. [4Fe-4S] cluster is required as a cofactor.

The protein localises to the cytoplasm. It catalyses the reaction N(6)-dimethylallyladenosine(37) in tRNA + (sulfur carrier)-SH + AH2 + 2 S-adenosyl-L-methionine = 2-methylsulfanyl-N(6)-dimethylallyladenosine(37) in tRNA + (sulfur carrier)-H + 5'-deoxyadenosine + L-methionine + A + S-adenosyl-L-homocysteine + 2 H(+). Catalyzes the methylthiolation of N6-(dimethylallyl)adenosine (i(6)A), leading to the formation of 2-methylthio-N6-(dimethylallyl)adenosine (ms(2)i(6)A) at position 37 in tRNAs that read codons beginning with uridine. The polypeptide is tRNA-2-methylthio-N(6)-dimethylallyladenosine synthase (Mycolicibacterium smegmatis (strain ATCC 700084 / mc(2)155) (Mycobacterium smegmatis)).